Here is a 144-residue protein sequence, read N- to C-terminus: Prefoldin subunit alpha (144 aa).

Belongs to the prefoldin alpha subunit family. Heterohexamer of two alpha and four beta subunits.

The protein resides in the cytoplasm. In terms of biological role, molecular chaperone capable of stabilizing a range of proteins. Seems to fulfill an ATP-independent, HSP70-like function in archaeal de novo protein folding. The chain is Prefoldin subunit alpha from Methanococcus aeolicus (strain ATCC BAA-1280 / DSM 17508 / OCM 812 / Nankai-3).